A 60-amino-acid polypeptide reads, in one-letter code: Conotoxin Cal6.30 (60 aa).

Residues 1-22 form the signal peptide; that stretch reads MKVTCVLTLAVLILTIGQIANA. Disulfide bonds link Cys-31–Cys-47, Cys-38–Cys-51, and Cys-46–Cys-55.

Expressed by the venom duct.

Its subcellular location is the secreted. Functionally, probable neurotoxin. This Californiconus californicus (California cone) protein is Conotoxin Cal6.30.